The sequence spans 131 residues: MKRRTAREKALQTLFQIDVSNIDPKEAITHALDEQESDPFFEELVFGVLEQKDKLDDMISQHLVNWKLDRIANVDRAILRLSVYEMVYQEDIPVSVSMNEAIELAKLFGDDKAPKFVNGVLSNIKNDLKQQ.

The protein belongs to the NusB family.

Its function is as follows. Involved in transcription antitermination. Required for transcription of ribosomal RNA (rRNA) genes. Binds specifically to the boxA antiterminator sequence of the ribosomal RNA (rrn) operons. The polypeptide is Transcription antitermination protein NusB (Bacillus pumilus (strain SAFR-032)).